The chain runs to 198 residues: Recombination protein RecR (198 aa).

Residues 57–72 (CEKCNTFTEAQICEVC) form a C4-type zinc finger. The Toprim domain occupies 80–175 (TLLCVVETPA…AVTRLARGVP (96 aa)).

It belongs to the RecR family.

May play a role in DNA repair. It seems to be involved in an RecBC-independent recombinational process of DNA repair. It may act with RecF and RecO. The protein is Recombination protein RecR of Burkholderia cenocepacia (strain HI2424).